The following is an 82-amino-acid chain: MDVTLGYLRESLSNHLENEVCQRICKKMLAKRYANEEEFVKDLDDNEMSFLNHVLEKEIKYAQNEQDQKRAKELNEVYELLL.

This chain is Sigma-G-dependent sporulation-specific SASP protein, found in Bacillus subtilis (strain 168).